Consider the following 59-residue polypeptide: Large ribosomal subunit protein bL32 (59 aa).

Positions 1-16 (MAVPKRKTSPSKRGMR) are enriched in basic residues. The tract at residues 1–41 (MAVPKRKTSPSKRGMRRSADALKAPTYIEDKNSGELRRPHH) is disordered. The segment covering 28–41 (IEDKNSGELRRPHH) has biased composition (basic and acidic residues).

This sequence belongs to the bacterial ribosomal protein bL32 family.

The protein is Large ribosomal subunit protein bL32 of Bartonella henselae (strain ATCC 49882 / DSM 28221 / CCUG 30454 / Houston 1) (Rochalimaea henselae).